A 351-amino-acid chain; its full sequence is Phosphoribosylformylglycinamidine cyclo-ligase (351 aa).

This sequence belongs to the AIR synthase family.

Its subcellular location is the cytoplasm. The enzyme catalyses 2-formamido-N(1)-(5-O-phospho-beta-D-ribosyl)acetamidine + ATP = 5-amino-1-(5-phospho-beta-D-ribosyl)imidazole + ADP + phosphate + H(+). Its pathway is purine metabolism; IMP biosynthesis via de novo pathway; 5-amino-1-(5-phospho-D-ribosyl)imidazole from N(2)-formyl-N(1)-(5-phospho-D-ribosyl)glycinamide: step 2/2. The chain is Phosphoribosylformylglycinamidine cyclo-ligase from Xylella fastidiosa (strain 9a5c).